The chain runs to 316 residues: 4-hydroxy-3-methylbut-2-enyl diphosphate reductase (316 aa).

Cys-12 lines the [4Fe-4S] cluster pocket. Residues His-41 and His-74 each coordinate (2E)-4-hydroxy-3-methylbut-2-enyl diphosphate. Dimethylallyl diphosphate contacts are provided by His-41 and His-74. His-41 and His-74 together coordinate isopentenyl diphosphate. A [4Fe-4S] cluster-binding site is contributed by Cys-96. (2E)-4-hydroxy-3-methylbut-2-enyl diphosphate is bound at residue His-124. His-124 is a dimethylallyl diphosphate binding site. His-124 contacts isopentenyl diphosphate. Glu-126 (proton donor) is an active-site residue. Thr-167 contributes to the (2E)-4-hydroxy-3-methylbut-2-enyl diphosphate binding site. Position 197 (Cys-197) interacts with [4Fe-4S] cluster. (2E)-4-hydroxy-3-methylbut-2-enyl diphosphate is bound by residues Ser-225, Ser-226, Asn-227, and Ser-269. The dimethylallyl diphosphate site is built by Ser-225, Ser-226, Asn-227, and Ser-269. Ser-225, Ser-226, Asn-227, and Ser-269 together coordinate isopentenyl diphosphate.

Belongs to the IspH family. As to quaternary structure, homodimer. [4Fe-4S] cluster serves as cofactor.

The catalysed reaction is isopentenyl diphosphate + 2 oxidized [2Fe-2S]-[ferredoxin] + H2O = (2E)-4-hydroxy-3-methylbut-2-enyl diphosphate + 2 reduced [2Fe-2S]-[ferredoxin] + 2 H(+). The enzyme catalyses dimethylallyl diphosphate + 2 oxidized [2Fe-2S]-[ferredoxin] + H2O = (2E)-4-hydroxy-3-methylbut-2-enyl diphosphate + 2 reduced [2Fe-2S]-[ferredoxin] + 2 H(+). Its pathway is isoprenoid biosynthesis; dimethylallyl diphosphate biosynthesis; dimethylallyl diphosphate from (2E)-4-hydroxy-3-methylbutenyl diphosphate: step 1/1. It participates in isoprenoid biosynthesis; isopentenyl diphosphate biosynthesis via DXP pathway; isopentenyl diphosphate from 1-deoxy-D-xylulose 5-phosphate: step 6/6. In terms of biological role, catalyzes the conversion of 1-hydroxy-2-methyl-2-(E)-butenyl 4-diphosphate (HMBPP) into a mixture of isopentenyl diphosphate (IPP) and dimethylallyl diphosphate (DMAPP). Acts in the terminal step of the DOXP/MEP pathway for isoprenoid precursor biosynthesis. In Klebsiella pneumoniae (strain 342), this protein is 4-hydroxy-3-methylbut-2-enyl diphosphate reductase.